The following is a 371-amino-acid chain: MRSTSLLMQAKAAIPDIKQLPTKHKVSLAYTIHWPHKTVNPNINIKPREPVIFLHGVFGSKKNYRDYCQTIANQNYTPVYSLDFRNHGESEHAFPLVNYSTLTQDVVDFIHEHKLEKVDIVGYSLGAKVALLTLLKHPELCRSGVIIGNAPIKTPQVKVYLKAFIKALKALGDKRPEIKSNDKAWRAKARDVMRKYIPDGDILHYLLRNIDIRKPKNITEYKPGTINFSMPISHFDNKVVEDIADWPEEEVEGLKFEGPVRVIRGTQSVFINDKGLAAYQKHFPNYTLTNFNSNHLIWAERPLQVTKVVSDFLKKTRLLEMDGSAKALEESPKESYSRPPAHQQPLHKNDFTHIDVGALPVNGAQAESTQA.

Active-site charge relay system residues include Ser-124 and His-295. Positions 325–352 (AKALEESPKESYSRPPAHQQPLHKNDFT) are disordered. Over residues 327 to 336 (ALEESPKESY) the composition is skewed to basic and acidic residues.

This sequence belongs to the AB hydrolase superfamily.

In terms of biological role, probable alcohol acetyltransferase that uses acetyl-CoA to synthesize acetate esters from various alcohols. Not involved in the synthesis of ethyl acetate. This chain is Probable alcohol acetyltransferase (EAT2), found in Cyberlindnera fabianii (Yeast).